The following is a 208-amino-acid chain: MKNLLCAVMLTSPLLYSTAVFADDAQQLRNTLVNTASLKTDFKQTVTDVNKKVIQTGSGILALAHPNQFYWHLTSPDESQIVADGKDLWIYNPFAEEVVIMDFAEAINASPIALLVHRDDTTWSQYSVTKKQDCYDIRPKAIDSGIVTVSVCFKNSQLTKFNVLDDKGNISQFDLSNQKVITTEDKALFKFVLPENVDIDDQRLKTLN.

Residues 1 to 22 (MKNLLCAVMLTSPLLYSTAVFA) form the signal peptide.

It belongs to the LolA family. Monomer.

It localises to the periplasm. Functionally, participates in the translocation of lipoproteins from the inner membrane to the outer membrane. Only forms a complex with a lipoprotein if the residue after the N-terminal Cys is not an aspartate (The Asp acts as a targeting signal to indicate that the lipoprotein should stay in the inner membrane). In Shewanella putrefaciens (strain CN-32 / ATCC BAA-453), this protein is Outer-membrane lipoprotein carrier protein.